Reading from the N-terminus, the 202-residue chain is Large ribosomal subunit protein bL9 (202 aa).

The interval 177-202 (AGEFFDPEAEPDDVAEAGGEQTAEEK) is disordered. The segment covering 181–191 (FDPEAEPDDVA) has biased composition (acidic residues).

This sequence belongs to the bacterial ribosomal protein bL9 family.

Its function is as follows. Binds to the 23S rRNA. This is Large ribosomal subunit protein bL9 from Nitrobacter hamburgensis (strain DSM 10229 / NCIMB 13809 / X14).